The primary structure comprises 142 residues: Coiled-coil-helix-coiled-coil-helix domain-containing protein 10, mitochondrial (142 aa).

The transit peptide at 1–16 (MPRGSRSAASRPASRP) directs the protein to the mitochondrion. Low complexity predominate over residues 1–20 (MPRGSRSAASRPASRPAAPS). Disordered regions lie at residues 1-45 (MPRG…PGLM) and 68-97 (ALTGAFSGGSSEPSQPAVQQAPTPAAPQPL). The segment covering 21–39 (AHPPAHPPPSAAAPAPAPS) has biased composition (pro residues). Residues 80–90 (PSQPAVQQAPT) show a composition bias toward low complexity. In terms of domain architecture, CHCH spans 99-140 (MGPCAYEIRQFLDCSTTQSDLSLCEGFSEALKQCKYYHGLSS). 2 consecutive short sequence motifs (cx9C motif) follow at residues 102–112 (CAYEIRQFLDC) and 122–132 (CEGFSEALKQC). 2 cysteine pairs are disulfide-bonded: Cys-102/Cys-132 and Cys-112/Cys-122.

In terms of tissue distribution, ubiquitously expressed. Higher expression is observed in heart and liver.

The protein resides in the mitochondrion intermembrane space. Functionally, may be involved in the maintenance of mitochondrial organization and mitochondrial cristae structure. The polypeptide is Coiled-coil-helix-coiled-coil-helix domain-containing protein 10, mitochondrial (CHCHD10) (Homo sapiens (Human)).